The sequence spans 126 residues: Phosphoribosyl-AMP cyclohydrolase (126 aa).

Asp74 lines the Mg(2+) pocket. Cys75 is a Zn(2+) binding site. Mg(2+) is bound by residues Asp76 and Asp78. Zn(2+) is bound by residues Cys92 and Cys99.

This sequence belongs to the PRA-CH family. Homodimer. It depends on Mg(2+) as a cofactor. Requires Zn(2+) as cofactor.

It is found in the cytoplasm. The catalysed reaction is 1-(5-phospho-beta-D-ribosyl)-5'-AMP + H2O = 1-(5-phospho-beta-D-ribosyl)-5-[(5-phospho-beta-D-ribosylamino)methylideneamino]imidazole-4-carboxamide. Its pathway is amino-acid biosynthesis; L-histidine biosynthesis; L-histidine from 5-phospho-alpha-D-ribose 1-diphosphate: step 3/9. In terms of biological role, catalyzes the hydrolysis of the adenine ring of phosphoribosyl-AMP. This chain is Phosphoribosyl-AMP cyclohydrolase, found in Geotalea daltonii (strain DSM 22248 / JCM 15807 / FRC-32) (Geobacter daltonii).